A 376-amino-acid polypeptide reads, in one-letter code: Chaperone protein DnaJ (376 aa).

The 66-residue stretch at 5–70 (DYYEVLGVAK…QKRAAYDQYG (66 aa)) folds into the J domain. The CR-type zinc finger occupies 136–214 (GYDTQIRVPS…CHGSGKVKET (79 aa)). The Zn(2+) site is built by cysteine 149, cysteine 152, cysteine 166, cysteine 169, cysteine 188, cysteine 191, cysteine 202, and cysteine 205. CXXCXGXG motif repeat units follow at residues 149–156 (CGVCHGSG), 166–173 (CPTCHGQG), 188–195 (CPKCHGTG), and 202–209 (CVHCHGSG).

Belongs to the DnaJ family. As to quaternary structure, homodimer. Requires Zn(2+) as cofactor.

Its subcellular location is the cytoplasm. Its function is as follows. Participates actively in the response to hyperosmotic and heat shock by preventing the aggregation of stress-denatured proteins and by disaggregating proteins, also in an autonomous, DnaK-independent fashion. Unfolded proteins bind initially to DnaJ; upon interaction with the DnaJ-bound protein, DnaK hydrolyzes its bound ATP, resulting in the formation of a stable complex. GrpE releases ADP from DnaK; ATP binding to DnaK triggers the release of the substrate protein, thus completing the reaction cycle. Several rounds of ATP-dependent interactions between DnaJ, DnaK and GrpE are required for fully efficient folding. Also involved, together with DnaK and GrpE, in the DNA replication of plasmids through activation of initiation proteins. In Burkholderia pseudomallei (strain 1710b), this protein is Chaperone protein DnaJ.